A 216-amino-acid chain; its full sequence is Adenylate kinase (216 aa).

10–15 (GAGKGT) is an ATP binding site. The interval 30–59 (STGDMFRAAMKNETALGLEAKSYIDKGELV) is NMP. AMP-binding positions include T31, R36, 57-59 (ELV), 85-88 (GFPR), and Q92. The tract at residues 126 to 164 (GRFICRTCGATYHKLFNPPKVEGTCDRCGGHEFYQREDD) is LID. Residue R127 participates in ATP binding. Residues C130 and C133 each coordinate Zn(2+). An ATP-binding site is contributed by 136–137 (TY). The Zn(2+) site is built by C150 and C153. Residues R161 and R172 each contribute to the AMP site. R200 is a binding site for ATP.

This sequence belongs to the adenylate kinase family. Monomer.

It localises to the cytoplasm. It catalyses the reaction AMP + ATP = 2 ADP. It functions in the pathway purine metabolism; AMP biosynthesis via salvage pathway; AMP from ADP: step 1/1. Functionally, catalyzes the reversible transfer of the terminal phosphate group between ATP and AMP. Plays an important role in cellular energy homeostasis and in adenine nucleotide metabolism. The polypeptide is Adenylate kinase (Enterococcus faecalis (strain ATCC 700802 / V583)).